Consider the following 162-residue polypeptide: V-type proton ATPase subunit c' (162 aa).

The Lumenal segment spans residues 1–11 (MSSNLCPIYSS). The helical transmembrane segment at 12–32 (FFGFAGVCASMVFSCLGAGYG) threads the bilayer. Residues 33 to 54 (TALAGRGIAAVGAFRPEIVMKS) lie on the Cytoplasmic side of the membrane. A helical transmembrane segment spans residues 55-75 (LIPVVMSGIIGVYGLVMSVLI). Over 76–93 (AGDMSPDNDYSLFSGFIH) the chain is Lumenal. A helical transmembrane segment spans residues 94 to 114 (LSAGLAVGLTGVAAGYAIGVV). Over 115 to 132 (GDRGVQSFMRQDRIFVSM) the chain is Cytoplasmic. Residues 133–153 (VLILIFAEVLGLYGLIVGLIL) traverse the membrane as a helical segment. Over 154–162 (QTKTSNVCY) the chain is Lumenal.

This sequence belongs to the V-ATPase proteolipid subunit family. In terms of assembly, V-ATPase is a heteromultimeric enzyme composed of a peripheral catalytic V1 complex (components A to H) attached to an integral membrane V0 proton pore complex (components: a, c, c', c'', d, e, f and VOA1). The decameric c-ring forms the proton-conducting pore, and is composed of eight proteolipid subunits c, one subunit c' and one subunit c''.

It localises to the vacuole membrane. In terms of biological role, proton-conducting pore forming subunit of the V0 complex of vacuolar(H+)-ATPase (V-ATPase), a multisubunit enzyme composed of a peripheral complex (V1) that hydrolyzes ATP and a membrane integral complex (V0) that translocates protons. V-ATPase is responsible for acidifying and maintaining the pH of intracellular compartments. The chain is V-type proton ATPase subunit c' from Schizosaccharomyces pombe (strain 972 / ATCC 24843) (Fission yeast).